A 409-amino-acid polypeptide reads, in one-letter code: Peptidase T (409 aa).

Zn(2+) is bound at residue histidine 78. Aspartate 80 is a catalytic residue. Aspartate 140 provides a ligand contact to Zn(2+). The active-site Proton acceptor is the glutamate 174. 3 residues coordinate Zn(2+): glutamate 175, aspartate 197, and histidine 379.

Belongs to the peptidase M20B family. The cofactor is Zn(2+).

Its subcellular location is the cytoplasm. It catalyses the reaction Release of the N-terminal residue from a tripeptide.. In terms of biological role, cleaves the N-terminal amino acid of tripeptides. The chain is Peptidase T from Aliivibrio fischeri (strain ATCC 700601 / ES114) (Vibrio fischeri).